Here is a 74-residue protein sequence, read N- to C-terminus: Brevinin-2Ef (74 aa).

The signal sequence occupies residues 1 to 22; sequence MFTMKKSLLLIFFLGTISLSLC. The propeptide occupies 23 to 41; sequence QEERNADDDDGEMTEEEKR. An intrachain disulfide couples Cys68 to Cys74.

Belongs to the frog skin active peptide (FSAP) family. Brevinin subfamily. As to expression, expressed by the skin glands.

Its subcellular location is the secreted. Its function is as follows. Shows antibacterial activity against representative Gram-negative and Gram-positive bacterial species, and hemolytic activity. The sequence is that of Brevinin-2Ef from Pelophylax lessonae (Pool frog).